A 565-amino-acid chain; its full sequence is Small ribosomal subunit protein bS1 (565 aa).

S1 motif domains are found at residues 30–96, 114–180, 201–269, 286–356, 373–443, and 454–529; these read SSVI…LSRD, NEKV…VSRR, GQVI…LGMK, NARF…LGLK, GSTV…LGVK, and GDVK…VSIK.

It belongs to the bacterial ribosomal protein bS1 family. In terms of processing, the initiator methionine may be removed.

Binds mRNA; thus facilitating recognition of the initiation point. It is needed to translate mRNA with a short Shine-Dalgarno (SD) purine-rich sequence. The protein is Small ribosomal subunit protein bS1 (rpsA) of Rhodopseudomonas palustris (strain ATCC BAA-98 / CGA009).